The chain runs to 342 residues: Probable allantoicase (342 aa).

Belongs to the allantoicase family.

It carries out the reaction allantoate + H2O = (S)-ureidoglycolate + urea. Its pathway is nitrogen metabolism; (S)-allantoin degradation; (S)-ureidoglycolate from allantoate (aminidohydrolase route): step 1/1. In terms of biological role, utilization of purines as secondary nitrogen sources, when primary sources are limiting. The sequence is that of Probable allantoicase from Schizosaccharomyces pombe (strain 972 / ATCC 24843) (Fission yeast).